The following is a 434-amino-acid chain: Trigger factor (434 aa).

The PPIase FKBP-type domain occupies 161-246 (KDIVTIDFKG…IHKVEEPQLP (86 aa)).

This sequence belongs to the FKBP-type PPIase family. Tig subfamily.

It localises to the cytoplasm. The enzyme catalyses [protein]-peptidylproline (omega=180) = [protein]-peptidylproline (omega=0). Involved in protein export. Acts as a chaperone by maintaining the newly synthesized protein in an open conformation. Functions as a peptidyl-prolyl cis-trans isomerase. The polypeptide is Trigger factor (Marinobacter nauticus (strain ATCC 700491 / DSM 11845 / VT8) (Marinobacter aquaeolei)).